Here is a 1210-residue protein sequence, read N- to C-terminus: Epidermal growth factor receptor (1210 aa).

The signal sequence occupies residues 1 to 24 (MRPSGTAGAALLALLAALCPASRA). The Extracellular portion of the chain corresponds to 25-645 (LEEKKVCQGT…CPTNGPKIPS (621 aa)). A disulfide bridge connects residues Cys-31 and Cys-58. N-linked (GlcNAc...) (complex) asparagine; atypical; partial glycosylation is present at Asn-56. Asn-73 carries an N-linked (GlcNAc...) asparagine; atypical glycan. An Approximate repeat occupies 75–300 (DLSFLKTIQE…CVKKCPRNYV (226 aa)). 3 N-linked (GlcNAc...) asparagine glycosylation sites follow: Asn-128, Asn-175, and Asn-196. Disulfide bonds link Cys-157-Cys-187, Cys-190-Cys-199, Cys-194-Cys-207, Cys-215-Cys-223, Cys-219-Cys-231, Cys-232-Cys-240, Cys-236-Cys-248, Cys-251-Cys-260, Cys-264-Cys-291, Cys-295-Cys-307, Cys-311-Cys-326, Cys-329-Cys-333, and Cys-337-Cys-362. Ser-229 is modified (phosphoserine). N-linked (GlcNAc...) asparagine glycosylation is found at Asn-352, Asn-361, Asn-413, and Asn-444. The stretch at 390 to 600 (QELDILKTVK…CVKTCPAGVM (211 aa)) is one Approximate repeat. 11 disulfide bridges follow: Cys-470–Cys-499, Cys-506–Cys-515, Cys-510–Cys-523, Cys-526–Cys-535, Cys-539–Cys-555, Cys-558–Cys-571, Cys-562–Cys-579, Cys-582–Cys-591, Cys-595–Cys-617, Cys-620–Cys-628, and Cys-624–Cys-636. N-linked (GlcNAc...) asparagine glycosylation is present at Asn-528. N-linked (GlcNAc...) asparagine; partial glycosylation is present at Asn-568. Asn-603 is a glycosylation site (N-linked (GlcNAc...) asparagine; partial). N-linked (GlcNAc...) (high mannose) asparagine glycosylation occurs at Asn-623. The helical transmembrane segment at 646–668 (IATGMVGALLLLLVVALGIGLFM) threads the bilayer. The Cytoplasmic portion of the chain corresponds to 669–1210 (RRRHIVRKRT…APQSSEFIGA (542 aa)). Phosphothreonine; by PKC and PKD/PRKD1 is present on Thr-678. The important for dimerization, phosphorylation and activation stretch occupies residues 688–704 (LVEPLTPSGEAPNQALL). Residue Thr-693 is modified to Phosphothreonine; by PKD/PRKD1. Residue Ser-695 is modified to Phosphoserine. The Protein kinase domain occupies 712 to 979 (FKKIKVLGSG…KMARDPQRYL (268 aa)). A Glycyl lysine isopeptide (Lys-Gly) (interchain with G-Cter in ubiquitin) cross-link involves residue Lys-716. An ATP-binding site is contributed by 718-726 (LGSGAFGTV). Residue Lys-737 forms a Glycyl lysine isopeptide (Lys-Gly) (interchain with G-Cter in ubiquitin) linkage. Lys-745 provides a ligand contact to ATP. An N6-(2-hydroxyisobutyryl)lysine modification is found at Lys-745. Glycyl lysine isopeptide (Lys-Gly) (interchain with G-Cter in ubiquitin) cross-links involve residues Lys-754 and Lys-757. Position 790–791 (790–791 (TQ)) interacts with ATP. Asp-837 functions as the Proton acceptor in the catalytic mechanism. Asp-855 contributes to the ATP binding site. A Glycyl lysine isopeptide (Lys-Gly) (interchain with G-Cter in ubiquitin) cross-link involves residue Lys-867. A Phosphotyrosine modification is found at Tyr-869. Glycyl lysine isopeptide (Lys-Gly) (interchain with G-Cter in ubiquitin) cross-links involve residues Lys-929, Lys-960, and Lys-970. Phosphoserine occurs at positions 991 and 995. Phosphotyrosine; by autocatalysis occurs at positions 998 and 1016. 2 positions are modified to phosphoserine: Ser-1026 and Ser-1039. Thr-1041 bears the Phosphothreonine mark. Ser-1042 is modified (phosphoserine). Cys-1049 is lipidated: S-palmitoyl cysteine. Residue Ser-1064 is modified to Phosphoserine. Tyr-1069 is subject to Phosphotyrosine. A phosphoserine mark is found at Ser-1070, Ser-1071, and Ser-1081. A phosphotyrosine; by autocatalysis mark is found at Tyr-1092 and Tyr-1110. Residues 1097–1137 (VPKRPAGSVQNPVYHNQPLNPAPSRDPHYQDPHSTAVGNPE) are disordered. Composition is skewed to polar residues over residues 1104-1115 (SVQNPVYHNQPL) and 1128-1137 (PHSTAVGNPE). Residue Cys-1146 is the site of S-palmitoyl cysteine attachment. Ser-1166 is subject to Phosphoserine. A phosphotyrosine; by autocatalysis mark is found at Tyr-1172 and Tyr-1197. Residue Arg-1199 is modified to Omega-N-methylarginine.

The protein belongs to the protein kinase superfamily. Tyr protein kinase family. EGF receptor subfamily. In terms of assembly, binding of the ligand triggers homo- and/or heterodimerization of the receptor triggering its autophosphorylation. Heterodimer with ERBB2. Forms a complex with CCDC88A/GIV (via SH2-like regions) and GNAI3 which leads to enhanced EGFR signaling and triggering of cell migration; binding to CCDC88A requires autophosphorylation of the EGFR C-terminal region, and ligand stimulation is required for recruitment of GNAI3 to the complex. Interacts with ERRFI1; inhibits dimerization of the kinase domain and autophosphorylation. Part of a complex with ERBB2 and either PIK3C2A or PIK3C2B. Interacts with GRB2; an adapter protein coupling the receptor to downstream signaling pathways. Interacts with GAB2; involved in signaling downstream of EGFR. Interacts with STAT3; mediates EGFR downstream signaling in cell proliferation. Interacts with RIPK1; involved in NF-kappa-B activation. Interacts (autophosphorylated) with CBL, CBLB and CBLC; involved in EGFR ubiquitination and regulation; interaction with CBL is reduced in the presence of tensin TNS4. Interacts with SOCS5; regulates EGFR degradation through ELOC- and ELOB-mediated ubiquitination and proteasomal degradation. Interacts with PRMT5; methylates EGFR and enhances interaction with PTPN6. Interacts (phosphorylated) with PTPN6; inhibits EGFR-dependent activation of MAPK/ERK. Interacts with COPG1; essential for regulation of EGF-dependent nuclear transport of EGFR by retrograde trafficking from the Golgi to the ER. Interacts with TNK2; this interaction is dependent on EGF stimulation and kinase activity of EGFR. Interacts with PCNA; positively regulates PCNA. Interacts with PELP1. Interacts with MUC1. Interacts with AP2M1. Interacts with FER. May interact with EPS8; mediates EPS8 phosphorylation. Interacts (via SH2 domains) with GRB2, NCK1 and NCK2. Interacts with ATXN2. Interacts with GAREM1. Interacts (ubiquitinated) with ANKRD13A/B/D; the interaction is direct and may regulate EGFR internalization after EGF stimulation. Interacts with GPER1; the interaction occurs in an estrogen-dependent manner. Interacts (via C-terminal cytoplasmic kinase domain) with ZPR1 (via zinc fingers). Interacts with RNF115 and RNF126. Interacts with GPRC5A (via its transmembrane domain). Interacts with FAM83B; positively regulates EGFR inducing its autophosphorylation in absence of stimulation by EGF. Interacts with LAPTM4B; positively correlates with EGFR activation. Interacts with STX19. Interacts with CD44. Interacts with PGRMC1; the interaction requires PGRMC1 homodimerization. Interacts with PIKFYVE. Interacts with NEU3. Interacts with TRAF4. Interacts with the ant venom OMEGA-myrmeciitoxin(02)-Mg1a. Interacts with CD82; this interaction facilitates ligand-induced endocytosis of the receptor and its subsequent desensitization. In terms of processing, phosphorylated on Tyr residues in response to EGF. Phosphorylation at Ser-695 is partial and occurs only if Thr-693 is phosphorylated. Phosphorylation at Thr-678 and Thr-693 by PRKD1 inhibits EGF-induced MAPK8/JNK1 activation. Dephosphorylation by PTPRJ prevents endocytosis and stabilizes the receptor at the plasma membrane. Autophosphorylation at Tyr-1197 is stimulated by methylation at Arg-1199 and enhances interaction with PTPN6. Autophosphorylation at Tyr-1092 and/or Tyr-1110 recruits STAT3. Dephosphorylated by PTPN1 and PTPN2. Post-translationally, monoubiquitinated and polyubiquitinated upon EGF stimulation; which does not affect tyrosine kinase activity or signaling capacity but may play a role in lysosomal targeting. Polyubiquitin linkage is mainly through 'Lys-63', but linkage through 'Lys-48', 'Lys-11' and 'Lys-29' also occurs. Deubiquitination by OTUD7B prevents degradation. Ubiquitinated by RNF115 and RNF126. Ubiquitinated by ZNRF1 or CBL at different lysines in response to EGF stimulation; leading to recruitment of the ESCRT machinery and subsequent degradation in the lysosomes. Deubiquitinated by UCHL1 leading to the inhibition of its degradation. Palmitoylated on Cys residues by ZDHHC20. Palmitoylation inhibits internalization after ligand binding, and increases the persistence of tyrosine-phosphorylated EGFR at the cell membrane. Palmitoylation increases the amplitude and duration of EGFR signaling. In terms of processing, methylated. Methylation at Arg-1199 by PRMT5 stimulates phosphorylation at Tyr-1197. In terms of tissue distribution, ubiquitously expressed. Isoform 2 is also expressed in ovarian cancers.

It is found in the cell membrane. The protein resides in the endoplasmic reticulum membrane. It localises to the golgi apparatus membrane. The protein localises to the nucleus membrane. Its subcellular location is the endosome. It is found in the endosome membrane. The protein resides in the nucleus. It localises to the secreted. It catalyses the reaction L-tyrosyl-[protein] + ATP = O-phospho-L-tyrosyl-[protein] + ADP + H(+). Its activity is regulated as follows. Endocytosis and inhibition of the activated EGFR by phosphatases like PTPRJ and PTPRK constitute immediate regulatory mechanisms. Upon EGF-binding phosphorylates EPS15 that regulates EGFR endocytosis and activity. Moreover, inducible feedback inhibitors including LRIG1, SOCS4, SOCS5 and ERRFI1 constitute alternative regulatory mechanisms for the EGFR signaling. Up-regulated by NEU3-mediated desialylation of N-linked glycan at Asn-528. In terms of biological role, receptor tyrosine kinase binding ligands of the EGF family and activating several signaling cascades to convert extracellular cues into appropriate cellular responses. Known ligands include EGF, TGFA/TGF-alpha, AREG, epigen/EPGN, BTC/betacellulin, epiregulin/EREG and HBEGF/heparin-binding EGF. Ligand binding triggers receptor homo- and/or heterodimerization and autophosphorylation on key cytoplasmic residues. The phosphorylated receptor recruits adapter proteins like GRB2 which in turn activates complex downstream signaling cascades. Activates at least 4 major downstream signaling cascades including the RAS-RAF-MEK-ERK, PI3 kinase-AKT, PLCgamma-PKC and STATs modules. May also activate the NF-kappa-B signaling cascade. Also directly phosphorylates other proteins like RGS16, activating its GTPase activity and probably coupling the EGF receptor signaling to the G protein-coupled receptor signaling. Also phosphorylates MUC1 and increases its interaction with SRC and CTNNB1/beta-catenin. Positively regulates cell migration via interaction with CCDC88A/GIV which retains EGFR at the cell membrane following ligand stimulation, promoting EGFR signaling which triggers cell migration. Plays a role in enhancing learning and memory performance. Plays a role in mammalian pain signaling (long-lasting hypersensitivity). Functionally, isoform 2 may act as an antagonist of EGF action. (Microbial infection) Acts as a receptor for hepatitis C virus (HCV) in hepatocytes and facilitates its cell entry. Mediates HCV entry by promoting the formation of the CD81-CLDN1 receptor complexes that are essential for HCV entry and by enhancing membrane fusion of cells expressing HCV envelope glycoproteins. The protein is Epidermal growth factor receptor of Homo sapiens (Human).